The sequence spans 923 residues: RNA polymerase-associated protein RapA (923 aa).

Residues 162 to 332 form the Helicase ATP-binding domain; the sequence is EVGNRVNPRV…FARLRLLDPE (171 aa). 175–182 contributes to the ATP binding site; sequence DEVGLGKT. The DEAH box motif lies at 278–281; sequence DEAH. In terms of domain architecture, Helicase C-terminal spans 443-597; sequence KIDWLIDFLK…TCPMGMALFS (155 aa).

Belongs to the SNF2/RAD54 helicase family. RapA subfamily. Interacts with the RNAP. Has a higher affinity for the core RNAP than for the holoenzyme. Its ATPase activity is stimulated by binding to RNAP.

Functionally, transcription regulator that activates transcription by stimulating RNA polymerase (RNAP) recycling in case of stress conditions such as supercoiled DNA or high salt concentrations. Probably acts by releasing the RNAP, when it is trapped or immobilized on tightly supercoiled DNA. Does not activate transcription on linear DNA. Probably not involved in DNA repair. The sequence is that of RNA polymerase-associated protein RapA from Haemophilus influenzae (strain PittEE).